The chain runs to 109 residues: MRLSILSVFSLVGAGMVSALPQESNLSMKRSDTSECVGPLLCCGTLTTPLDPVVDPLLLALGIDAANIVGSIGLLCHGYEESSCPTKPQCCTEANLLGGTLALGCADLK.

An N-terminal signal peptide occupies residues 1-19 (MRLSILSVFSLVGAGMVSA). Disulfide bonds link C36–C90, C42–C84, C43–C76, and C91–C105.

Belongs to the fungal hydrophobin family.

It localises to the secreted. Its subcellular location is the cell wall. Its function is as follows. Aerial growth, conidiation, and dispersal of filamentous fungi in the environment rely upon a capability of their secreting small amphipathic proteins called hydrophobins (HPBs) with low sequence identity. Class I can self-assemble into an outermost layer of rodlet bundles on aerial cell surfaces, conferring cellular hydrophobicity that supports fungal growth, development and dispersal; whereas Class II form highly ordered films at water-air interfaces through intermolecular interactions but contribute nothing to the rodlet structure. In P.expansum, hydrophobins contribute to germination, tolerance to cold stress and mycotoxins patulin and citrinin production. This chain is Class I hydrophobin G, found in Penicillium expansum (Blue mold rot fungus).